We begin with the raw amino-acid sequence, 491 residues long: F-box/LRR-repeat protein 7 (491 aa).

Residues 1-79 are disordered; the sequence is MGANNGKQYG…GRGSSTSSSS (79 aa). Over residues 10 to 26 the composition is skewed to low complexity; the sequence is GSEGKGSSSISSDVSSS. The segment covering 27–55 has biased composition (polar residues); that stretch reads TDHTPTKAQKNVATSEDSDLSMRTLSTPS. An F-box domain is found at 111-157; sequence QASIDRLPDHSMVQIFSFLPTNQLCRCARVCRRWYNLAWDPRLWRTI. LRR repeat units lie at residues 170–195, 196–221, 222–247, 253–281, 282–307, 308–333, 334–359, 360–385, 386–411, 412–437, and 438–463; these read LKVLTRRLCQDTPNVCLMLETVTVSG, CRRLTDRGLYTIAQCCPELRRLEVSG, CYNISNEAVFDVVSLCPNLEHLDVSG, CISLTREASIKLSPLHGKQISIRYLDMTD, CFVLEDEGLHTIAAHCTQLTHLYLRR, CVRLTDEGLRYLVIYCASIKELSVSD, CRFVSDFGLREIAKLESRLRYLSIAH, CGRVTDVGIRYVAKYCSKLRYLNARG, CEGITDHGVEYLAKNCTKLKSLDIGK, CPLVSDTGLECLALNCFNLKRLSLKS, and CESITGQGLQIVAANCFDLQTLNVQD.

This sequence belongs to the FBXL7 family. In terms of assembly, part of the SCF (SKP1-CUL1-F-box) E3 ubiquitin-protein ligase complex SCF(FBXL7) composed of CUL1, SKP1, RBX1 and FBXL7. Interacts with AURKA; interaction takes place during mitosis but not in interphase. Interacts with BIRC5; this interaction allows BIRC5 to be polyubiquitinated by the SCF(FBXL7) E3 ubiquitin-protein ligase complex.

It is found in the cytoplasm. The protein localises to the cytoskeleton. It localises to the microtubule organizing center. The protein resides in the centrosome. Its pathway is protein modification; protein ubiquitination. Functionally, substrate recognition component of a SCF (SKP1-CUL1-F-box protein) E3 ubiquitin-protein ligase complex. During mitosis, it mediates the ubiquitination and subsequent proteasomal degradation of AURKA, causing mitotic arrest. It also regulates mitochondrial function by mediating the ubiquitination and proteasomal degradation of the apoptosis inhibitor BIRC5. In Homo sapiens (Human), this protein is F-box/LRR-repeat protein 7 (FBXL7).